Consider the following 174-residue polypeptide: UPF0113 protein AF_0058 (174 aa).

The region spanning 87–161 (RNRVWVNERG…KVFVENLVDR (75 aa)) is the PUA domain.

Belongs to the UPF0113 family.

The sequence is that of UPF0113 protein AF_0058 from Archaeoglobus fulgidus (strain ATCC 49558 / DSM 4304 / JCM 9628 / NBRC 100126 / VC-16).